The primary structure comprises 109 residues: SVAFSRAVLAEFLATLIFVFFGLGSALSWPQALPSVLQIALAFGLAIGTLVQALGHVSGAHINPAVTVACLVGCHVSFLRAAFYVAAQLLGAVAGAAILHEITPPDVRG.

Residues 1–6 (SVAFSR) are Cytoplasmic-facing. The chain crosses the membrane as a helical span at residues 7–27 (AVLAEFLATLIFVFFGLGSAL). At 28–35 (SWPQALPS) the chain is on the extracellular side. A helical membrane pass occupies residues 36-54 (VLQIALAFGLAIGTLVQAL). Over 55-59 (GHVSG) the chain is Cytoplasmic. Residues 60 to 69 (AHINPAVTVA) constitute an intramembrane region (discontinuously helical). The short motif at 63-65 (NPA) is the NPA 1 element. Over 70 to 80 (CLVGCHVSFLR) the chain is Cytoplasmic. The chain crosses the membrane as a helical span at residues 81–102 (AAFYVAAQLLGAVAGAAILHEI). Over 103–109 (TPPDVRG) the chain is Extracellular.

This sequence belongs to the MIP/aquaporin (TC 1.A.8) family. Homotetramer. Serine phosphorylation is necessary and sufficient for expression at the apical membrane. Endocytosis is not phosphorylation-dependent. Post-translationally, N-glycosylated.

The protein localises to the apical cell membrane. Its subcellular location is the basolateral cell membrane. It localises to the cell membrane. The protein resides in the cytoplasmic vesicle membrane. It is found in the golgi apparatus. The protein localises to the trans-Golgi network membrane. The enzyme catalyses H2O(in) = H2O(out). It carries out the reaction glycerol(in) = glycerol(out). Functionally, forms a water-specific channel that provides the plasma membranes of renal collecting duct with high permeability to water, thereby permitting water to move in the direction of an osmotic gradient. Plays an essential role in renal water homeostasis. Could also be permeable to glycerol. The sequence is that of Aquaporin-2 from Dasypus novemcinctus (Nine-banded armadillo).